A 379-amino-acid polypeptide reads, in one-letter code: Glutamate 5-kinase (379 aa).

An ATP-binding site is contributed by Lys17. Residues Ser57, Asp144, and Asn156 each contribute to the substrate site. ATP is bound at residue Ser176–Asp177. Residues Ser282–Glu359 form the PUA domain.

It belongs to the glutamate 5-kinase family.

Its subcellular location is the cytoplasm. The enzyme catalyses L-glutamate + ATP = L-glutamyl 5-phosphate + ADP. It functions in the pathway amino-acid biosynthesis; L-proline biosynthesis; L-glutamate 5-semialdehyde from L-glutamate: step 1/2. Functionally, catalyzes the transfer of a phosphate group to glutamate to form L-glutamate 5-phosphate. The polypeptide is Glutamate 5-kinase (Bartonella henselae (strain ATCC 49882 / DSM 28221 / CCUG 30454 / Houston 1) (Rochalimaea henselae)).